Consider the following 335-residue polypeptide: Type 1 fimbrin D-mannose specific adhesin (335 aa).

A signal peptide spans 1 to 22 (MKIYSALLLAGTALFFTHPALA).

Belongs to the fimbrial protein family.

Its subcellular location is the fimbrium. In terms of biological role, involved in regulation of length and mediation of adhesion of type 1 fimbriae (but not necessary for the production of fimbriae). A mannose-binding adhesin. The protein is Type 1 fimbrin D-mannose specific adhesin (fimH) of Salmonella typhimurium (strain LT2 / SGSC1412 / ATCC 700720).